The following is a 227-amino-acid chain: Cytochrome c oxidase subunit 2 (227 aa).

At 1–26 (MATWSNFNLQNSASPLMEQIIFFHDH) the chain is on the mitochondrial intermembrane side. The chain crosses the membrane as a helical span at residues 27–51 (TLVILIMITILVGYLMISLFFNSYI). At 52–62 (NRFLLEGQMIE) the chain is on the mitochondrial matrix side. Residues 63-81 (LIWTILPAITLIFIALPSL) form a helical membrane-spanning segment. Topologically, residues 82–227 (RLLYLLDELN…NFINWINNYS (146 aa)) are mitochondrial intermembrane. Histidine 161, cysteine 196, glutamate 198, cysteine 200, histidine 204, and methionine 207 together coordinate Cu cation. Glutamate 198 provides a ligand contact to Mg(2+).

The protein belongs to the cytochrome c oxidase subunit 2 family. Component of the cytochrome c oxidase (complex IV, CIV), a multisubunit enzyme composed of a catalytic core of 3 subunits and several supernumerary subunits. The complex exists as a monomer or a dimer and forms supercomplexes (SCs) in the inner mitochondrial membrane with ubiquinol-cytochrome c oxidoreductase (cytochrome b-c1 complex, complex III, CIII). Cu cation is required as a cofactor.

Its subcellular location is the mitochondrion inner membrane. The catalysed reaction is 4 Fe(II)-[cytochrome c] + O2 + 8 H(+)(in) = 4 Fe(III)-[cytochrome c] + 2 H2O + 4 H(+)(out). Component of the cytochrome c oxidase, the last enzyme in the mitochondrial electron transport chain which drives oxidative phosphorylation. The respiratory chain contains 3 multisubunit complexes succinate dehydrogenase (complex II, CII), ubiquinol-cytochrome c oxidoreductase (cytochrome b-c1 complex, complex III, CIII) and cytochrome c oxidase (complex IV, CIV), that cooperate to transfer electrons derived from NADH and succinate to molecular oxygen, creating an electrochemical gradient over the inner membrane that drives transmembrane transport and the ATP synthase. Cytochrome c oxidase is the component of the respiratory chain that catalyzes the reduction of oxygen to water. Electrons originating from reduced cytochrome c in the intermembrane space (IMS) are transferred via the dinuclear copper A center (CU(A)) of subunit 2 and heme A of subunit 1 to the active site in subunit 1, a binuclear center (BNC) formed by heme A3 and copper B (CU(B)). The BNC reduces molecular oxygen to 2 water molecules using 4 electrons from cytochrome c in the IMS and 4 protons from the mitochondrial matrix. The protein is Cytochrome c oxidase subunit 2 (COII) of Choristoneura rosaceana (Oblique banded leafroller).